Consider the following 107-residue polypeptide: UPF0145 protein BH1111 (107 aa).

The protein belongs to the UPF0145 family.

The protein is UPF0145 protein BH1111 of Halalkalibacterium halodurans (strain ATCC BAA-125 / DSM 18197 / FERM 7344 / JCM 9153 / C-125) (Bacillus halodurans).